We begin with the raw amino-acid sequence, 68 residues long: Basic phospholipase A2 homolog BdipTx-I (68 aa).

Cys28 and Cys44 are disulfide-bonded.

This sequence belongs to the phospholipase A2 family. Group II subfamily. K49 sub-subfamily. As to expression, expressed by the venom gland.

The protein localises to the secreted. Snake venom phospholipase A2 (PLA2) that lacks enzymatic activity. Is myotoxic, induces edema, and causes systemic effects (renal changes that lead to proteinuria) on mice. A model of myotoxic mechanism has been proposed: an apo Lys49-PLA2 is activated by the entrance of a hydrophobic molecule (e.g. fatty acid) at the hydrophobic channel of the protein leading to a reorientation of a monomer. This reorientation causes a transition between 'inactive' to 'active' states, causing alignment of C-terminal and membrane-docking sites (MDoS) side-by-side and putting the membrane-disruption sites (MDiS) in the same plane, exposed to solvent and in a symmetric position for both monomers. The MDoS region stabilizes the toxin on membrane by the interaction of charged residues with phospholipid head groups. Subsequently, the MDiS region destabilizes the membrane with penetration of hydrophobic residues. This insertion causes a disorganization of the membrane, allowing an uncontrolled influx of ions (i.e. calcium and sodium), and eventually triggering irreversible intracellular alterations and cell death. The sequence is that of Basic phospholipase A2 homolog BdipTx-I from Bothrops diporus (Chaco lancehead).